Here is a 201-residue protein sequence, read N- to C-terminus: Orotate phosphoribosyltransferase (201 aa).

Residue 113–121 (EDIITTGKS) participates in 5-phospho-alpha-D-ribose 1-diphosphate binding. Positions 117 and 145 each coordinate orotate.

The protein belongs to the purine/pyrimidine phosphoribosyltransferase family. PyrE subfamily. Homodimer. It depends on Mg(2+) as a cofactor.

The catalysed reaction is orotidine 5'-phosphate + diphosphate = orotate + 5-phospho-alpha-D-ribose 1-diphosphate. It participates in pyrimidine metabolism; UMP biosynthesis via de novo pathway; UMP from orotate: step 1/2. In terms of biological role, catalyzes the transfer of a ribosyl phosphate group from 5-phosphoribose 1-diphosphate to orotate, leading to the formation of orotidine monophosphate (OMP). The chain is Orotate phosphoribosyltransferase from Helicobacter pylori (strain Shi470).